A 150-amino-acid chain; its full sequence is Large ribosomal subunit protein uL15 (150 aa).

Residues 1–57 (MRLEDIRPQAGSTRRRRRLGRGVSAGQGASCGKGMRGQKARKGGSTRPGFEGGQTPL) form a disordered region. The span at 23-35 (VSAGQGASCGKGM) shows a compositional bias: gly residues.

It belongs to the universal ribosomal protein uL15 family. As to quaternary structure, part of the 50S ribosomal subunit.

Its function is as follows. Binds to the 23S rRNA. The chain is Large ribosomal subunit protein uL15 from Synechococcus sp. (strain JA-2-3B'a(2-13)) (Cyanobacteria bacterium Yellowstone B-Prime).